The chain runs to 99 residues: Nucleoid-associated protein EbfC (99 aa).

It belongs to the YbaB/EbfC family. Homodimer.

The protein resides in the cytoplasm. It localises to the nucleoid. Its function is as follows. Binds to DNA and alters its conformation. May be involved in regulation of gene expression, nucleoid organization and DNA protection. This Borrelia hermsii (strain HS1 / DAH) protein is Nucleoid-associated protein EbfC.